The following is a 291-amino-acid chain: Light-independent protochlorophyllide reductase iron-sulfur ATP-binding protein (291 aa).

ATP contacts are provided by residues 10–15 (GIGKST) and Lys39. Residue Ser14 coordinates Mg(2+). Positions 95 and 129 each coordinate [4Fe-4S] cluster. 180–181 (NR) serves as a coordination point for ATP.

The protein belongs to the NifH/BchL/ChlL family. In terms of assembly, homodimer. Protochlorophyllide reductase is composed of three subunits; ChlL, ChlN and ChlB. [4Fe-4S] cluster is required as a cofactor.

It localises to the plastid. The protein resides in the chloroplast. The catalysed reaction is chlorophyllide a + oxidized 2[4Fe-4S]-[ferredoxin] + 2 ADP + 2 phosphate = protochlorophyllide a + reduced 2[4Fe-4S]-[ferredoxin] + 2 ATP + 2 H2O. It functions in the pathway porphyrin-containing compound metabolism; chlorophyll biosynthesis (light-independent). Component of the dark-operative protochlorophyllide reductase (DPOR) that uses Mg-ATP and reduced ferredoxin to reduce ring D of protochlorophyllide (Pchlide) to form chlorophyllide a (Chlide). This reaction is light-independent. The L component serves as a unique electron donor to the NB-component of the complex, and binds Mg-ATP. In Picea abies (Norway spruce), this protein is Light-independent protochlorophyllide reductase iron-sulfur ATP-binding protein.